Consider the following 148-residue polypeptide: Putative fusion protein (148 aa).

Residues 1–34 (MDRALSTFPGDDDETNERNINHREKTSGEHGHYE) are disordered. Positions 16 to 34 (NERNINHREKTSGEHGHYE) are enriched in basic and acidic residues.

Belongs to the poxviruses fusion protein family. Homotrimer, covalently linked.

It localises to the virion membrane. This Sheeppox virus (strain KS-1) (SPPV) protein is Putative fusion protein.